Here is a 202-residue protein sequence, read N- to C-terminus: MSRYTGPSWKVSRRLGISLTGTGKELARRPYAPGDHGQNNRRKISEYGMQLREKQKLRMMYGLTERQFSNLFVRAGKIREGLPGTNFMVLLERRLDNMVYRLGLATTRRQARQLVNHGHITVDGKRVDIPSYEVEIGQVIGVREKSKDLKIISEAVEAVVGRPQFVQFDADKLEGSLVRLPQRDELEADIDDSLIVEYYNKL.

The S4 RNA-binding domain occupies 93–156; that stretch reads RRLDNMVYRL…KDLKIISEAV (64 aa).

It belongs to the universal ribosomal protein uS4 family. As to quaternary structure, part of the 30S ribosomal subunit. Contacts protein S5. The interaction surface between S4 and S5 is involved in control of translational fidelity.

Functionally, one of the primary rRNA binding proteins, it binds directly to 16S rRNA where it nucleates assembly of the body of the 30S subunit. Its function is as follows. With S5 and S12 plays an important role in translational accuracy. The protein is Small ribosomal subunit protein uS4 of Pediococcus pentosaceus (strain ATCC 25745 / CCUG 21536 / LMG 10740 / 183-1w).